A 333-amino-acid chain; its full sequence is Terpene synthase 2 (333 aa).

The DDxx(x)D/E motif signature appears at 82–87; the sequence is DDDLDT. Positions 219-227 match the NDxxSxxxD/E motif motif; sequence NDCVSYAKE.

This sequence belongs to the terpene synthase family.

It catalyses the reaction (2E,6E)-farnesyl diphosphate = (E)-beta-farnesene + diphosphate. The enzyme catalyses (2E,6E)-farnesyl diphosphate = (1S,2S,4R)-beta-elemene + diphosphate. Functionally, terpene synthase that converts its substrate farnesyl diphosphate (FPP) into the sesquiterpene (E)-beta-farnesene as major product. Is also able to convert FPP into delta-elemene, beta-elemene, (E)-beta-caryophyllene, 9-epi-(E)-caryophyllene, and a yet unidentified sesquiterpene. This chain is Terpene synthase 2, found in Dictyostelium purpureum (Slime mold).